The primary structure comprises 223 residues: Ribonuclease 3 (223 aa).

Residues 4-127 form the RNase III domain; sequence LEEFERNLGY…VMGAIYLEAG (124 aa). Glu40 contributes to the Mg(2+) binding site. Asp44 is a catalytic residue. The Mg(2+) site is built by Asp113 and Glu116. The active site involves Glu116. One can recognise a DRBM domain in the interval 154 to 223; sequence DYKTALQEVT…AKIALEKIKK (70 aa).

This sequence belongs to the ribonuclease III family. In terms of assembly, homodimer. Mg(2+) serves as cofactor.

It is found in the cytoplasm. It catalyses the reaction Endonucleolytic cleavage to 5'-phosphomonoester.. In terms of biological role, digests double-stranded RNA. Involved in the processing of primary rRNA transcript to yield the immediate precursors to the large and small rRNAs (23S and 16S). Processes some mRNAs, and tRNAs when they are encoded in the rRNA operon. Processes pre-crRNA and tracrRNA of type II CRISPR loci if present in the organism. This Campylobacter concisus (strain 13826) protein is Ribonuclease 3.